The sequence spans 310 residues: Probable metallo-hydrolase Mb2322c (310 aa).

The tract at residues methionine 1–glutamine 29 is disordered. The Zn(2+) site is built by histidine 137, aspartate 139, aspartate 141, histidine 142, histidine 221, aspartate 242, and histidine 288.

The protein belongs to the metallo-beta-lactamase superfamily. Zn(2+) is required as a cofactor.

This Mycobacterium bovis (strain ATCC BAA-935 / AF2122/97) protein is Probable metallo-hydrolase Mb2322c.